Reading from the N-terminus, the 754-residue chain is RNA exonuclease 5 (754 aa).

Positions 1-36 are disordered; that stretch reads MELEEEENPRKRKETPNSALTTELDRPSWDVQDPEP. Residues 222–370 form the Exonuclease domain; it reads LFGLDCEVCL…EDARTALELV (149 aa). 2 consecutive RRM domains span residues 488–562 and 583–662; these read STIY…RLLT and GTIY…RHLQ.

The chain is RNA exonuclease 5 (Rexo5) from Rattus norvegicus (Rat).